Reading from the N-terminus, the 438-residue chain is MKLDKSKQKEINKICVVGLGYIGLPTASMLAIQGYKVIGVDIDEERVKTIRDGKLIINEQGLMTLLTGAITSGNLVVKTEPEEADVYIICVPTPATADKNGKKCDLICVLSAVNNIKPYLKDGDLIIIESTIPPKTTEKIYDDISKNTGKNIYMAYCPERVLPGNILKELVENDRTIGGINKKSAQLAKEIYASFIEGNLYITDSTTAEMVKLMENTFRDVNIALANEFAKVSTELDINVWDAINLANKHPRVNILNPGPGVGGHCISIDPWFIVGSSENAELIKKARNLNDDMPKYVASLIIKEFKEMGICNPKVGIFGITYKGDVEDTRETPARAIIDYLLQNDFEVSIYDPYAKDFEYPLNTIEESIKNSDALIFLTDHSEFKNFEKEDIKEISHMMKNKIVMDMKNTLNHNLWEEQGFNVKLLGDGKSWIVKTL.

NAD(+) contacts are provided by Tyr21, Ile22, Asp41, Arg46, Thr93, and Thr131. UDP-N-acetyl-alpha-D-mannosaminouronate-binding residues include Arg160, Val161, Lys212, Asn216, Arg219, His250, Arg252, and Gly263. Lys212 functions as the Proton donor/acceptor in the catalytic mechanism. Residue Cys266 is the Nucleophile of the active site. Positions 323 and 324 each coordinate UDP-N-acetyl-alpha-D-mannosaminouronate. Arg331 is a binding site for NAD(+). UDP-N-acetyl-alpha-D-mannosaminouronate is bound at residue Lys409.

It belongs to the UDP-glucose/GDP-mannose dehydrogenase family. In terms of assembly, homotetramer; probably dimer of dimers.

The catalysed reaction is UDP-N-acetyl-alpha-D-mannosamine + 2 NAD(+) + H2O = UDP-N-acetyl-alpha-D-mannosaminouronate + 2 NADH + 3 H(+). In terms of biological role, catalyzes the four-electron oxidation of UDP-N-acetyl-D-mannosamine (UDP-ManNAc), reducing NAD(+) and releasing UDP-N-acetylmannosaminuronic acid (UDP-ManNAcA). This chain is UDP-N-acetyl-D-mannosamine dehydrogenase (wecC), found in Methanococcus aeolicus (strain ATCC BAA-1280 / DSM 17508 / OCM 812 / Nankai-3).